A 127-amino-acid chain; its full sequence is Large ribosomal subunit protein bL17 (127 aa).

It belongs to the bacterial ribosomal protein bL17 family. As to quaternary structure, part of the 50S ribosomal subunit. Contacts protein L32.

The protein is Large ribosomal subunit protein bL17 of Xanthomonas campestris pv. campestris (strain 8004).